Here is a 495-residue protein sequence, read N- to C-terminus: Cytochrome P450 94C1 (495 aa).

The helical transmembrane segment at 2–22 (LLIISFTIVSFFFIIIFSLFH) threads the bilayer. Residue Cys-439 coordinates heme.

It belongs to the cytochrome P450 family. Heme serves as cofactor.

It localises to the membrane. The protein localises to the endoplasmic reticulum membrane. It catalyses the reaction a 12-hydroxyjasmonyl-L-alpha-amino acid + 2 reduced [NADPH--hemoprotein reductase] + 2 O2 = a 12-hydroxy-12-oxojasmonyl-L-alpha-amino acid + 2 oxidized [NADPH--hemoprotein reductase] + 3 H2O + 3 H(+). Its function is as follows. Involved in the oxidation of the plant hormone jasmonoyl-L-isoleucine (JA-Ile), a bioactive phytohormone of the jasmonate-mediated signaling pathway. Converts 12-hydroxy-JA-Ile (12OH-JA-Ile) to the carboxy-derivative 12COOH-JA-Ile. Exerts negative feedback control on JA-Ile levels and plays a role in attenuation of jasmonate responses. Also functions as in-chain fatty acids hydroxylase in vitro. Catalyzes the hydroxylation of 12-hydroxy-jasmonoyl-L-phenylalanine (12OH-JA-Phe) in vitro. Converts 12OH-JA-Phe to the carboxy-derivative 12COOH-JA-Phe. The chain is Cytochrome P450 94C1 from Arabidopsis thaliana (Mouse-ear cress).